The following is a 239-amino-acid chain: Phosphoribosylaminoimidazole-succinocarboxamide synthase (239 aa).

The protein belongs to the SAICAR synthetase family.

The enzyme catalyses 5-amino-1-(5-phospho-D-ribosyl)imidazole-4-carboxylate + L-aspartate + ATP = (2S)-2-[5-amino-1-(5-phospho-beta-D-ribosyl)imidazole-4-carboxamido]succinate + ADP + phosphate + 2 H(+). Its pathway is purine metabolism; IMP biosynthesis via de novo pathway; 5-amino-1-(5-phospho-D-ribosyl)imidazole-4-carboxamide from 5-amino-1-(5-phospho-D-ribosyl)imidazole-4-carboxylate: step 1/2. In Nitratiruptor sp. (strain SB155-2), this protein is Phosphoribosylaminoimidazole-succinocarboxamide synthase.